We begin with the raw amino-acid sequence, 325 residues long: uncharacterized protein (325 aa).

The interval M1–T32 is disordered. Residues E23 to T32 are compositionally biased toward low complexity. Residues A135 to L223 adopt a coiled-coil conformation.

It localises to the cytoplasm. Its subcellular location is the cytoskeleton. The protein localises to the microtubule organizing center. It is found in the spindle pole body. This is an uncharacterized protein from Schizosaccharomyces pombe (strain 972 / ATCC 24843) (Fission yeast).